The following is an 89-amino-acid chain: Small ribosomal subunit protein uS15 (89 aa).

The protein belongs to the universal ribosomal protein uS15 family. In terms of assembly, part of the 30S ribosomal subunit. Forms a bridge to the 50S subunit in the 70S ribosome, contacting the 23S rRNA.

Its function is as follows. One of the primary rRNA binding proteins, it binds directly to 16S rRNA where it helps nucleate assembly of the platform of the 30S subunit by binding and bridging several RNA helices of the 16S rRNA. Forms an intersubunit bridge (bridge B4) with the 23S rRNA of the 50S subunit in the ribosome. The sequence is that of Small ribosomal subunit protein uS15 from Protochlamydia amoebophila (strain UWE25).